The primary structure comprises 373 residues: D-alanine--D-alanine ligase A (373 aa).

An ATP-grasp domain is found at 146–355; sequence KRLAEFAGIP…YGELLSRLVD (210 aa). 179-234 serves as a coordination point for ATP; sequence VEGLSLPVFVKPCNMGSSVGIHKVKTQDALEAALDDAFRYDVKVLVQQGIDAREIE. Mg(2+) contacts are provided by aspartate 308, glutamate 322, and asparagine 324.

The protein belongs to the D-alanine--D-alanine ligase family. It depends on Mg(2+) as a cofactor. Mn(2+) serves as cofactor.

It localises to the cytoplasm. The catalysed reaction is 2 D-alanine + ATP = D-alanyl-D-alanine + ADP + phosphate + H(+). It participates in cell wall biogenesis; peptidoglycan biosynthesis. Cell wall formation. The sequence is that of D-alanine--D-alanine ligase A from Bradyrhizobium diazoefficiens (strain JCM 10833 / BCRC 13528 / IAM 13628 / NBRC 14792 / USDA 110).